A 129-amino-acid polypeptide reads, in one-letter code: Small ribosomal subunit protein bS6 (129 aa).

The tract at residues 103–129 (LKQKEERAERAPRREERAEAKPEAAAE) is disordered. Positions 104–129 (KQKEERAERAPRREERAEAKPEAAAE) are enriched in basic and acidic residues.

Belongs to the bacterial ribosomal protein bS6 family.

In terms of biological role, binds together with bS18 to 16S ribosomal RNA. The polypeptide is Small ribosomal subunit protein bS6 (Vibrio campbellii (strain ATCC BAA-1116)).